Consider the following 1011-residue polypeptide: Beta-galactosidase A (1011 aa).

A signal peptide spans 1 to 19 (MKLLSSWVVAALAAQAAGA). Substrate is bound by residues Tyr-96, 140-142 (NAE), and Asn-199. Glu-200 functions as the Proton donor in the catalytic mechanism. 2 disulfide bridges follow: Cys-205–Cys-206 and Cys-267–Cys-316. Glu-299 serves as the catalytic Nucleophile. Tyr-365 is a binding site for substrate. Residues Asn-374, Asn-456, Asn-625, Asn-707, Asn-763, Asn-780, and Asn-917 are each glycosylated (N-linked (GlcNAc...) asparagine).

The protein belongs to the glycosyl hydrolase 35 family. Monomer.

The protein resides in the secreted. The enzyme catalyses Hydrolysis of terminal non-reducing beta-D-galactose residues in beta-D-galactosides.. Functionally, cleaves beta-linked terminal galactosyl residues from gangliosides, glycoproteins, and glycosaminoglycans. Has high in vitro transglycosylation activity with p-nitrophenyl-beta-D-galactopyranoside, methyl-beta-D-galactopyranoside or lactose as a donor and galactose as an acceptor. The sequence is that of Beta-galactosidase A (lacA) from Penicillium sp.